The following is a 556-amino-acid chain: 2-isopropylmalate synthase (556 aa).

Positions 33 to 307 constitute a Pyruvate carboxyltransferase domain; it reads PIWCSSDLRD…HPQLDFSDID (275 aa). Positions 42, 246, 248, and 282 each coordinate Mg(2+). Positions 439-556 are regulatory domain; sequence ATSPYVLASH…AVTQAEAKAA (118 aa).

Belongs to the alpha-IPM synthase/homocitrate synthase family. LeuA type 2 subfamily. As to quaternary structure, homodimer. Mg(2+) serves as cofactor.

The protein resides in the cytoplasm. The catalysed reaction is 3-methyl-2-oxobutanoate + acetyl-CoA + H2O = (2S)-2-isopropylmalate + CoA + H(+). Its pathway is amino-acid biosynthesis; L-leucine biosynthesis; L-leucine from 3-methyl-2-oxobutanoate: step 1/4. Functionally, catalyzes the condensation of the acetyl group of acetyl-CoA with 3-methyl-2-oxobutanoate (2-ketoisovalerate) to form 3-carboxy-3-hydroxy-4-methylpentanoate (2-isopropylmalate). This chain is 2-isopropylmalate synthase, found in Pseudomonas aeruginosa (strain ATCC 15692 / DSM 22644 / CIP 104116 / JCM 14847 / LMG 12228 / 1C / PRS 101 / PAO1).